The sequence spans 399 residues: N-acetylglucosamine-6-phosphate deacetylase (399 aa).

A divalent metal cation contacts are provided by histidine 65, histidine 67, and glutamate 135. 146 to 147 (AH) contacts substrate. 2 residues coordinate a divalent metal cation: histidine 201 and histidine 222. Residues 225–226 (NG), arginine 233, and 254–257 (DGHH) each bind substrate. Aspartate 279 contributes to the a divalent metal cation binding site. Aspartate 279 acts as the Proton donor/acceptor in catalysis. A substrate-binding site is contributed by 312-314 (LAG).

This sequence belongs to the metallo-dependent hydrolases superfamily. NagA family. Homodimer. A divalent metal cation is required as a cofactor.

The catalysed reaction is N-acetyl-D-glucosamine 6-phosphate + H2O = D-glucosamine 6-phosphate + acetate. Its pathway is amino-sugar metabolism; N-acetylneuraminate degradation; D-fructose 6-phosphate from N-acetylneuraminate: step 4/5. Involved in the first committed step in the biosynthesis of amino-sugar-nucleotides. Catalyzes the hydrolysis of the N-acetyl group of N-acetylglucosamine-6-phosphate (GlcNAc-6-P) to yield glucosamine 6-phosphate and acetate. The sequence is that of N-acetylglucosamine-6-phosphate deacetylase (manD) from Vibrio furnissii.